Here is a 409-residue protein sequence, read N- to C-terminus: MQYLKPINVFSEIGRLKKVLLHRPGKELENLTPSIMKRLLFDDIPYLHVAIQEHDSFADTLRGNGVEVVYIEDLISETLSNDDSIKEQFISQFILEAGIRTENKTRALKDYFCNMSVNDMISNMIAGVTRDDLKNYKSDSLNSLVNSEYPLIIDPMPNILFTRDPFASIGHGLTINRMSTKTRHRETIFAEYIFKYHPIYKDNVPIWYNRDEDTTLEGGDELVLSRDVLAIGVSERTESESVEKVARKLFEQKISFNTILAFQIPQSRAYMHLDTVFTQIDHTTFTSFISDDMKFTIYALTYDVSSGSIKVKSEKAKLEDILGFYLGCKVNIIKCAGGDLIHGAREQWNDGANTLAIAPGEVIVYSRNHMTNKLLEEFGIKVYQIPSSELSRGRGGPRCMSMPLIREDI.

Cys-399 (amidino-cysteine intermediate) is an active-site residue.

Belongs to the arginine deiminase family.

Its subcellular location is the cytoplasm. The enzyme catalyses L-arginine + H2O = L-citrulline + NH4(+). It functions in the pathway amino-acid degradation; L-arginine degradation via ADI pathway; carbamoyl phosphate from L-arginine: step 1/2. This Borrelia duttonii (strain Ly) protein is Arginine deiminase.